Consider the following 204-residue polypeptide: ATP phosphoribosyltransferase (204 aa).

It belongs to the ATP phosphoribosyltransferase family. Short subfamily. In terms of assembly, heteromultimer composed of HisG and HisZ subunits.

The protein localises to the cytoplasm. It carries out the reaction 1-(5-phospho-beta-D-ribosyl)-ATP + diphosphate = 5-phospho-alpha-D-ribose 1-diphosphate + ATP. It participates in amino-acid biosynthesis; L-histidine biosynthesis; L-histidine from 5-phospho-alpha-D-ribose 1-diphosphate: step 1/9. Catalyzes the condensation of ATP and 5-phosphoribose 1-diphosphate to form N'-(5'-phosphoribosyl)-ATP (PR-ATP). Has a crucial role in the pathway because the rate of histidine biosynthesis seems to be controlled primarily by regulation of HisG enzymatic activity. The sequence is that of ATP phosphoribosyltransferase from Staphylococcus aureus (strain USA300).